The primary structure comprises 448 residues: Beta-glucosidase A (448 aa).

Glutamate 166 acts as the Proton donor in catalysis. The active-site Nucleophile is glutamate 352.

This sequence belongs to the glycosyl hydrolase 1 family. Homooctamer.

It carries out the reaction Hydrolysis of terminal, non-reducing beta-D-glucosyl residues with release of beta-D-glucose.. BglA is intracellular and cleaves cellobiose probably through inorganic phosphate mediated hydrolysis. The polypeptide is Beta-glucosidase A (bglA) (Paenibacillus polymyxa (Bacillus polymyxa)).